The chain runs to 309 residues: Dihydroorotate dehydrogenase B (NAD(+)), catalytic subunit (309 aa).

Residues Ser-21 and 45 to 46 each bind FMN; that span reads KA. Residues Lys-45 and 69–73 contribute to the substrate site; that span reads NAIGL. The FMN site is built by Asn-99 and Asn-127. Asn-127 is a binding site for substrate. Residue Cys-130 is the Nucleophile of the active site. Lys-165 and Ile-191 together coordinate FMN. 192–193 serves as a coordination point for substrate; it reads NT. FMN-binding positions include Gly-217, 243–244, and 265–266; these read GG and GT.

The protein belongs to the dihydroorotate dehydrogenase family. Type 1 subfamily. Heterotetramer of 2 PyrK and 2 PyrD type B subunits. Requires FMN as cofactor.

The protein resides in the cytoplasm. The enzyme catalyses (S)-dihydroorotate + NAD(+) = orotate + NADH + H(+). Its pathway is pyrimidine metabolism; UMP biosynthesis via de novo pathway; orotate from (S)-dihydroorotate (NAD(+) route): step 1/1. Catalyzes the conversion of dihydroorotate to orotate with NAD(+) as electron acceptor. The polypeptide is Dihydroorotate dehydrogenase B (NAD(+)), catalytic subunit (pyrD) (Bacillus mycoides (strain KBAB4) (Bacillus weihenstephanensis)).